Consider the following 431-residue polypeptide: ATP-dependent RNA helicase DBP8 (431 aa).

The Q motif signature appears at 2 to 30 (ADFKSLGLSKWLTESLRAMKITQPTAIQK). In terms of domain architecture, Helicase ATP-binding spans 33 to 209 (IPKILEGRDC…NAPVQKGKPP (177 aa)). 46-53 (AKTGSGKT) contacts ATP. The short motif at 155–158 (DEAD) is the DEAD box element. Residues 242 to 389 (YLYQLLTCEE…TNKVHDTAVI (148 aa)) enclose the Helicase C-terminal domain. The interval 404–431 (LMAMQKENFGERKRQQKKKQNDGKSLRS) is disordered. The span at 411–431 (NFGERKRQQKKKQNDGKSLRS) shows a compositional bias: basic and acidic residues.

It belongs to the DEAD box helicase family. DDX49/DBP8 subfamily. In terms of assembly, interacts with ESF2.

The protein resides in the nucleus. It is found in the nucleolus. It catalyses the reaction ATP + H2O = ADP + phosphate + H(+). ATP-binding RNA helicase involved in 40S ribosomal subunit biogenesis and is required for the normal formation of 18S rRNAs through pre-rRNA processing at A0, A1 and A2 sites. Required for vegetative growth. The chain is ATP-dependent RNA helicase DBP8 (DBP8) from Saccharomyces cerevisiae (strain YJM789) (Baker's yeast).